The chain runs to 154 residues: Golgi-associated plant pathogenesis-related protein 1 (154 aa).

Residues 1-21 are disordered; that stretch reads MGKSASKQFHNEVLKAHNEYR. The N-myristoyl glycine moiety is linked to residue glycine 2. Basic and acidic residues predominate over residues 9 to 21; the sequence is FHNEVLKAHNEYR. Residues 14 to 132 form the SCP domain; sequence LKAHNEYRQK…SDGSSFVVAR (119 aa). Residues 30-53 adopt a coiled-coil conformation; that stretch reads KLCKNLNREAQQYSEALASTRILK. The tract at residues 91–98 is interaction with CAV1; the sequence is NFQQPGFT.

The protein belongs to the CRISP family. In terms of assembly, homodimer. Interacts with CAV1. In terms of tissue distribution, highest expression in lung and peripheral leukocytes, and minor expression in liver and kidney.

It localises to the golgi apparatus membrane. The protein is Golgi-associated plant pathogenesis-related protein 1 (GLIPR2) of Homo sapiens (Human).